A 598-amino-acid chain; its full sequence is Fructan 6-exohydrolase (598 aa).

Residues 1–30 (MAARLPLAACVVAFHLCLLLSSLVRSPSTA) form the signal peptide. D65 is a catalytic residue. Residues N93, N288, and N351 are each glycosylated (N-linked (GlcNAc...) asparagine). A disulfide bond links C451 and C497. N-linked (GlcNAc...) asparagine glycosylation occurs at N572.

Belongs to the glycosyl hydrolase 32 family. As to expression, expressed in leaves, stems, roots and inflorescences. Maximum expression is detected in stems, particularly the penultimate internode.

The catalysed reaction is Hydrolysis of terminal, non-reducing (2-&gt;6)-linked beta-D-fructofuranose residues in fructans.. Not inhibited by sucrose. Functionally, hydrolyzes levan-type beta-(2-&gt;6)-linked fructans to fructose, but not inulin-type beta-(2-&gt;1)-linked fructans. In Triticum aestivum (Wheat), this protein is Fructan 6-exohydrolase.